We begin with the raw amino-acid sequence, 381 residues long: Sterol 24-C-methyltransferase ERG6A (381 aa).

It belongs to the class I-like SAM-binding methyltransferase superfamily. Erg6/SMT family.

The enzyme catalyses lanosterol + S-adenosyl-L-methionine = eburicol + S-adenosyl-L-homocysteine + H(+). It functions in the pathway steroid metabolism; ergosterol biosynthesis. Functionally, sterol 24-C-methyltransferase; part of the third module of ergosterol biosynthesis pathway that includes the late steps of the pathway. ERG6A and ERG6B methylate lanosterol at C-24 to produce eburicol. The third module or late pathway involves the ergosterol synthesis itself through consecutive reactions that mainly occur in the endoplasmic reticulum (ER) membrane. Firstly, the squalene synthase ERG9 catalyzes the condensation of 2 farnesyl pyrophosphate moieties to form squalene, which is the precursor of all steroids. Squalene synthase is crucial for balancing the incorporation of farnesyl diphosphate (FPP) into sterol and nonsterol isoprene synthesis. Secondly, squalene is converted into lanosterol by the consecutive action of the squalene epoxidase ERG1 and the lanosterol synthase ERG7. Then, the delta(24)-sterol C-methyltransferase ERG6 methylates lanosterol at C-24 to produce eburicol. Eburicol is the substrate of the sterol 14-alpha demethylase encoded by CYP51A, CYP51B and CYP51C, to yield 4,4,24-trimethyl ergosta-8,14,24(28)-trienol. CYP51B encodes the enzyme primarily responsible for sterol 14-alpha-demethylation, and plays an essential role in ascospore formation. CYP51A encodes an additional sterol 14-alpha-demethylase, induced on ergosterol depletion and responsible for the intrinsic variation in azole sensitivity. The third CYP51 isoform, CYP51C, does not encode a sterol 14-alpha-demethylase, but is required for full virulence on host wheat ears. The C-14 reductase ERG24 then reduces the C14=C15 double bond which leads to 4,4-dimethylfecosterol. A sequence of further demethylations at C-4, involving the C-4 demethylation complex containing the C-4 methylsterol oxidases ERG25, the sterol-4-alpha-carboxylate 3-dehydrogenase ERG26 and the 3-keto-steroid reductase ERG27, leads to the production of fecosterol via 4-methylfecosterol. ERG28 has a role as a scaffold to help anchor ERG25, ERG26 and ERG27 to the endoplasmic reticulum. The C-8 sterol isomerase ERG2 then catalyzes the reaction which results in unsaturation at C-7 in the B ring of sterols and thus converts fecosterol to episterol. The sterol-C5-desaturases ERG3A and ERG3BB then catalyze the introduction of a C-5 double bond in the B ring to produce 5-dehydroepisterol. The C-22 sterol desaturases ERG5A and ERG5B further convert 5-dehydroepisterol into ergosta-5,7,22,24(28)-tetraen-3beta-ol by forming the C-22(23) double bond in the sterol side chain. Finally, ergosta-5,7,22,24(28)-tetraen-3beta-ol is substrate of the C-24(28) sterol reductase ERG4 to produce ergosterol. The sequence is that of Sterol 24-C-methyltransferase ERG6A (FG02783.1) from Gibberella zeae (strain ATCC MYA-4620 / CBS 123657 / FGSC 9075 / NRRL 31084 / PH-1) (Wheat head blight fungus).